Reading from the N-terminus, the 123-residue chain is Ribonuclease P protein component 2 (123 aa).

It belongs to the eukaryotic/archaeal RNase P protein component 2 family. In terms of assembly, consists of a catalytic RNA component and at least 4-5 protein subunits.

It is found in the cytoplasm. It catalyses the reaction Endonucleolytic cleavage of RNA, removing 5'-extranucleotides from tRNA precursor.. Its function is as follows. Part of ribonuclease P, a protein complex that generates mature tRNA molecules by cleaving their 5'-ends. The chain is Ribonuclease P protein component 2 from Sulfurisphaera tokodaii (strain DSM 16993 / JCM 10545 / NBRC 100140 / 7) (Sulfolobus tokodaii).